The primary structure comprises 60 residues: Large ribosomal subunit protein uL30 (60 aa).

The protein belongs to the universal ribosomal protein uL30 family. Part of the 50S ribosomal subunit.

This chain is Large ribosomal subunit protein uL30, found in Alcanivorax borkumensis (strain ATCC 700651 / DSM 11573 / NCIMB 13689 / SK2).